Reading from the N-terminus, the 729-residue chain is Fatty acid oxidation complex subunit alpha (729 aa).

The interval M1–K189 is enoyl-CoA hydratase/isomerase. Residue D296 participates in substrate binding. The segment at E311–A729 is 3-hydroxyacyl-CoA dehydrogenase. NAD(+)-binding positions include M324, D343, V400–E402, K407, and S429. Catalysis depends on H450, which acts as the For 3-hydroxyacyl-CoA dehydrogenase activity. Residue N453 participates in NAD(+) binding. 2 residues coordinate substrate: N500 and Y660.

The protein in the N-terminal section; belongs to the enoyl-CoA hydratase/isomerase family. It in the C-terminal section; belongs to the 3-hydroxyacyl-CoA dehydrogenase family. In terms of assembly, heterotetramer of two alpha chains (FadB) and two beta chains (FadA).

The catalysed reaction is a (3S)-3-hydroxyacyl-CoA + NAD(+) = a 3-oxoacyl-CoA + NADH + H(+). The enzyme catalyses a (3S)-3-hydroxyacyl-CoA = a (2E)-enoyl-CoA + H2O. It catalyses the reaction a 4-saturated-(3S)-3-hydroxyacyl-CoA = a (3E)-enoyl-CoA + H2O. It carries out the reaction (3S)-3-hydroxybutanoyl-CoA = (3R)-3-hydroxybutanoyl-CoA. The catalysed reaction is a (3Z)-enoyl-CoA = a 4-saturated (2E)-enoyl-CoA. The enzyme catalyses a (3E)-enoyl-CoA = a 4-saturated (2E)-enoyl-CoA. It functions in the pathway lipid metabolism; fatty acid beta-oxidation. Involved in the aerobic and anaerobic degradation of long-chain fatty acids via beta-oxidation cycle. Catalyzes the formation of 3-oxoacyl-CoA from enoyl-CoA via L-3-hydroxyacyl-CoA. It can also use D-3-hydroxyacyl-CoA and cis-3-enoyl-CoA as substrate. This is Fatty acid oxidation complex subunit alpha from Enterobacter cloacae.